Here is an 88-residue protein sequence, read N- to C-terminus: Small ribosomal subunit protein bS16c (88 aa).

This sequence belongs to the bacterial ribosomal protein bS16 family.

The protein localises to the plastid. It is found in the chloroplast. The protein is Small ribosomal subunit protein bS16c of Calycanthus floridus var. glaucus (Eastern sweetshrub).